The chain runs to 410 residues: Regulator of microtubule dynamics protein 2 (410 aa).

The helical transmembrane segment at 10 to 27 (ILGIVVGTAGISLLLLWY) threads the bilayer. A coiled-coil region spans residues 71-109 (RQLQILEKLNELLTHMEELKEEIRVLKEAIPKLEEYIQG). Position 121 is a phosphoserine (serine 121). A compositionally biased stretch (basic residues) spans 122 to 131 (PQHRARKRRL). The disordered stretch occupies residues 122–153 (PQHRARKRRLATVQSSATSNSSEEAESEGGYV). The residue at position 139 (threonine 139) is a Phosphothreonine. Residue tyrosine 152 is modified to Phosphotyrosine. 2 positions are modified to phosphothreonine: threonine 154 and threonine 157.

The protein belongs to the RMDN family. As to quaternary structure, interacts with microtubules.

The protein localises to the membrane. Its subcellular location is the cytoplasm. It localises to the cytoskeleton. It is found in the spindle. The protein resides in the spindle pole. This Bos taurus (Bovine) protein is Regulator of microtubule dynamics protein 2 (RMDN2).